We begin with the raw amino-acid sequence, 303 residues long: tRNA dimethylallyltransferase (303 aa).

12 to 19 (GPTGVGKT) serves as a coordination point for ATP. Substrate is bound at residue 14-19 (TGVGKT). Residues 37-40 (DSAQ) are interaction with substrate tRNA.

Belongs to the IPP transferase family. In terms of assembly, monomer. It depends on Mg(2+) as a cofactor.

It catalyses the reaction adenosine(37) in tRNA + dimethylallyl diphosphate = N(6)-dimethylallyladenosine(37) in tRNA + diphosphate. In terms of biological role, catalyzes the transfer of a dimethylallyl group onto the adenine at position 37 in tRNAs that read codons beginning with uridine, leading to the formation of N6-(dimethylallyl)adenosine (i(6)A). The polypeptide is tRNA dimethylallyltransferase (Fusobacterium nucleatum subsp. nucleatum (strain ATCC 25586 / DSM 15643 / BCRC 10681 / CIP 101130 / JCM 8532 / KCTC 2640 / LMG 13131 / VPI 4355)).